The chain runs to 535 residues: Zinc transporter ZIP5 (535 aa).

The first 19 residues, 1-19, serve as a signal peptide directing secretion; sequence MGPPVHHLLTGLCVGVALG. The Extracellular segment spans residues 20–210; it reads WVGGSVPNLG…PAPPGDVLSA (191 aa). N-linked (GlcNAc...) asparagine glycosylation is found at N49 and N158. A helical membrane pass occupies residues 211–231; sequence LLHSGLAVLFLSLPAPLSLLL. Residues 232 to 242 are Cytoplasmic-facing; that stretch reads LRLLGPRLLRP. A helical membrane pass occupies residues 243 to 263; the sequence is VLGFLGALAVGTLCGDALLHL. Residues 264 to 285 lie on the Extracellular side of the membrane; sequence LPHAQGGRHTGPSEQSEEDLGP. Residues 286 to 306 form a helical membrane-spanning segment; the sequence is GLSVLGGLFLLFMLENTLGLV. The Cytoplasmic portion of the chain corresponds to 307–439; the sequence is RHRGLRPRCC…LLQEGLSFRK (133 aa). Residues 316–373 form a disordered region; the sequence is CRNKRDLGEPNPDPEDGSGMVLRPLQAASEPEVQGQRENRQSSPSLAPPGHQGHSHEH. S333 is modified (phosphoserine). The residue at position 371 (H371) is a Pros-methylhistidine. A helical transmembrane segment spans residues 440-460; sequence LLLLSLVSGALGLGGAALGVG. Residues 461-465 are Extracellular-facing; sequence LSLGP. The chain crosses the membrane as a helical span at residues 466–486; that stretch reads VPLTPWVFGTTAGVFLYVALV. Residues 487–503 lie on the Cytoplasmic side of the membrane; the sequence is DMLPTLLRPPEPLPVFH. Residues 504-524 form a helical membrane-spanning segment; it reads VLLQGLGLLLGGSLMFTIALL. Over 525-535 the chain is Extracellular; it reads EEQLVPTVPDG.

Belongs to the ZIP transporter (TC 2.A.5) family. Homodimer. Post-translationally, N-Glycosylated. Methylated at His-371 by METTL9. As to expression, expressed in all stages of eye development and primarily in the sclera and several layers of the retina, including the inner segment, outer plexiform layer and ganglion cell layer. Expressed in pancreas, kidney and the proximal and distal small intestine as well as in the embryonic visceral yolk sac. In the proximal intestine, expression is predominant in the crypts but diminishes toward the apical regions of the villi.

It is found in the basolateral cell membrane. It carries out the reaction Zn(2+)(in) = Zn(2+)(out). In terms of biological role, uniporter that transports zinc(2+) into polarized cells of enterocytes, pancreatic acinar and endoderm cells across the basolateral membrane and participates, notably, in zinc excretion from the intestine by the uptake of zinc from the blood into the intestine. The transport mechanism is temperature- and concentration-dependent and saturable. In addition, is also a high affinity copper transporter in vitro. Also may regulate glucose-stimulated insulin secretion (GSIS) in islets primarily through the zinc-activated SIRT1-PPARGC1A axis. Could regulate the BMP/TGF-beta (bone morphogenetic protein/transforming growth factor-beta) signaling pathway and modulates extracellular matrix (ECM) proteins of the sclera. Plays a role in eye development. This chain is Zinc transporter ZIP5, found in Mus musculus (Mouse).